Consider the following 116-residue polypeptide: NADH-ubiquinone oxidoreductase chain 3 (116 aa).

The next 3 helical transmembrane spans lie at 3–23 (LITT…TISF), 56–76 (FFLI…LLPL), and 87–107 (LTLI…IYEW).

It belongs to the complex I subunit 3 family.

The protein resides in the mitochondrion membrane. The catalysed reaction is a ubiquinone + NADH + 5 H(+)(in) = a ubiquinol + NAD(+) + 4 H(+)(out). In terms of biological role, core subunit of the mitochondrial membrane respiratory chain NADH dehydrogenase (Complex I) that is believed to belong to the minimal assembly required for catalysis. Complex I functions in the transfer of electrons from NADH to the respiratory chain. The immediate electron acceptor for the enzyme is believed to be ubiquinone. This Oncorhynchus tshawytscha (Chinook salmon) protein is NADH-ubiquinone oxidoreductase chain 3 (MT-ND3).